The primary structure comprises 187 residues: UPF0301 protein YqgE (187 aa).

Belongs to the UPF0301 (AlgH) family.

The chain is UPF0301 protein YqgE from Escherichia fergusonii (strain ATCC 35469 / DSM 13698 / CCUG 18766 / IAM 14443 / JCM 21226 / LMG 7866 / NBRC 102419 / NCTC 12128 / CDC 0568-73).